Reading from the N-terminus, the 1171-residue chain is Phytochrome B (1171 aa).

Low complexity predominate over residues 1-19 (MASGSRATPTRSPSSARPA). The disordered stretch occupies residues 1-53 (MASGSRATPTRSPSSARPAAPRHQHHHSQSSGGSTSRAGGGGGGGGGGGGGAA). Positions 38-52 (AGGGGGGGGGGGGGA) are enriched in gly residues. Residues 259 to 442 (DVKLLCDTVV…AFGLQLNMEL (184 aa)) form the GAF domain. Cys-364 contributes to the phytochromobilin binding site. PAS domains are found at residues 661-732 (VARE…LRGD) and 795-866 (DYKA…MIVL). Residues 943-1161 (YIYQEIKNPL…FFHIVLELPQ (219 aa)) enclose the Histidine kinase domain.

Belongs to the phytochrome family. Homodimer. Post-translationally, contains one covalently linked phytochromobilin chromophore.

Regulatory photoreceptor which exists in two forms that are reversibly interconvertible by light: the Pr form that absorbs maximally in the red region of the spectrum and the Pfr form that absorbs maximally in the far-red region. Photoconversion of Pr to Pfr induces an array of morphogenic responses, whereas reconversion of Pfr to Pr cancels the induction of those responses. Pfr controls the expression of a number of nuclear genes including those encoding the small subunit of ribulose-bisphosphate carboxylase, chlorophyll A/B binding protein, protochlorophyllide reductase, rRNA, etc. It also controls the expression of its own gene(s) in a negative feedback fashion. This is Phytochrome B (PHYB) from Oryza sativa subsp. japonica (Rice).